Here is a 554-residue protein sequence, read N- to C-terminus: Exodeoxyribonuclease 7 large subunit (554 aa).

The protein belongs to the XseA family. Heterooligomer composed of large and small subunits.

The protein resides in the cytoplasm. The catalysed reaction is Exonucleolytic cleavage in either 5'- to 3'- or 3'- to 5'-direction to yield nucleoside 5'-phosphates.. Functionally, bidirectionally degrades single-stranded DNA into large acid-insoluble oligonucleotides, which are then degraded further into small acid-soluble oligonucleotides. This is Exodeoxyribonuclease 7 large subunit from Chlamydia pneumoniae (Chlamydophila pneumoniae).